The primary structure comprises 374 residues: Putative phosphoserine aminotransferase (374 aa).

Residue Arg-48 participates in L-glutamate binding. Pyridoxal 5'-phosphate-binding positions include Ala-82–Thr-83, Phe-106, Thr-152, Asp-174, and Gln-197. Position 198 is an N6-(pyridoxal phosphate)lysine (Lys-198). Position 249–250 (Asn-249–Thr-250) interacts with pyridoxal 5'-phosphate.

The protein belongs to the class-V pyridoxal-phosphate-dependent aminotransferase family. SerC subfamily. As to quaternary structure, homodimer. Pyridoxal 5'-phosphate serves as cofactor.

The protein resides in the cytoplasm. The catalysed reaction is O-phospho-L-serine + 2-oxoglutarate = 3-phosphooxypyruvate + L-glutamate. It carries out the reaction 4-(phosphooxy)-L-threonine + 2-oxoglutarate = (R)-3-hydroxy-2-oxo-4-phosphooxybutanoate + L-glutamate. Its pathway is amino-acid biosynthesis; L-serine biosynthesis; L-serine from 3-phospho-D-glycerate: step 2/3. It functions in the pathway cofactor biosynthesis; pyridoxine 5'-phosphate biosynthesis; pyridoxine 5'-phosphate from D-erythrose 4-phosphate: step 3/5. Catalyzes the reversible conversion of 3-phosphohydroxypyruvate to phosphoserine and of 3-hydroxy-2-oxo-4-phosphonooxybutanoate to phosphohydroxythreonine. The polypeptide is Putative phosphoserine aminotransferase (Mycobacterium avium (strain 104)).